The sequence spans 92 residues: UPF0473 protein Cbei_1107 (92 aa).

This sequence belongs to the UPF0473 family.

The protein is UPF0473 protein Cbei_1107 of Clostridium beijerinckii (strain ATCC 51743 / NCIMB 8052) (Clostridium acetobutylicum).